The chain runs to 386 residues: MDSPKTLARVEVKENGDTFNVKAYEKAVKSYITKRKPLGEALDEEIMDELSVKFGIVDDALEDLFKQIQDAGISIVDKDGNPSPLALVTDEIEKEEVSDTAMDEIVTNVRIDDPVRMYLKEIGRYPLISLDEETKLAEAIIAGGEGAEFAKQMLAEANLRLVVSIAKRYSGRGMQFLDLIQEGNMGLMKAVDKFDHTKGFKFSTYATWWIRQAITRAIADQARTIRIPVHMVETINKLIRVQRNLLQELGRDPSPEEIGKELHMAPDKVREVLKIAQEPVSLETPIGEEDDSHLGDFIEDDVIESPVDYTNRILLREQLDEVMDTLTDREENVLRMRFGLDDGRMHTLEDVGKQFKVTRERIRQIEAKAIKKLRHPRRSKPLRDFM.

The sigma-70 factor domain-2 stretch occupies residues 154 to 224 (LAEANLRLVV…TRAIADQART (71 aa)). Positions 178–181 (DLIQ) match the Interaction with polymerase core subunit RpoC motif. The tract at residues 233-309 (ETINKLIRVQ…DDVIESPVDY (77 aa)) is sigma-70 factor domain-3. The tract at residues 322–375 (VMDTLTDREENVLRMRFGLDDGRMHTLEDVGKQFKVTRERIRQIEAKAIKKLRH) is sigma-70 factor domain-4. Residues 348-367 (LEDVGKQFKVTRERIRQIEA) constitute a DNA-binding region (H-T-H motif).

It belongs to the sigma-70 factor family. RpoD/SigA subfamily. Interacts transiently with the RNA polymerase catalytic core.

The protein resides in the cytoplasm. Sigma factors are initiation factors that promote the attachment of RNA polymerase to specific initiation sites and are then released. This sigma factor is the primary sigma factor during exponential growth. This Lactococcus lactis subsp. lactis (strain IL1403) (Streptococcus lactis) protein is RNA polymerase sigma factor SigA.